A 227-amino-acid chain; its full sequence is ATP-dependent dethiobiotin synthetase BioD (227 aa).

Position 13 to 18 (13 to 18 (DVGKTV)) interacts with ATP. T17 is a binding site for Mg(2+). K38 is a catalytic residue. ATP is bound by residues D55, 116–119 (EGAG), and 176–177 (NR). Positions 55 and 116 each coordinate Mg(2+).

This sequence belongs to the dethiobiotin synthetase family. As to quaternary structure, homodimer. Requires Mg(2+) as cofactor.

The protein resides in the cytoplasm. It catalyses the reaction (7R,8S)-7,8-diammoniononanoate + CO2 + ATP = (4R,5S)-dethiobiotin + ADP + phosphate + 3 H(+). It functions in the pathway cofactor biosynthesis; biotin biosynthesis; biotin from 7,8-diaminononanoate: step 1/2. Catalyzes a mechanistically unusual reaction, the ATP-dependent insertion of CO2 between the N7 and N8 nitrogen atoms of 7,8-diaminopelargonic acid (DAPA, also called 7,8-diammoniononanoate) to form a ureido ring. In Aliivibrio salmonicida (strain LFI1238) (Vibrio salmonicida (strain LFI1238)), this protein is ATP-dependent dethiobiotin synthetase BioD.